Consider the following 261-residue polypeptide: 3beta-hydroxysteroid dehydrogenase 1 (261 aa).

NAD(+) is bound by residues 65 to 66 (DV), Asn92, Tyr158, and Lys162. The Proton acceptor role is filled by Tyr158.

Belongs to the short-chain dehydrogenases/reductases (SDR) family.

It catalyses the reaction 3-oxo-5beta-cholan-24-oate + NADH + H(+) = isolithocholate + NAD(+). It carries out the reaction 12alpha-hydroxy-3-oxo-5beta-cholan-24-oate + NADH + H(+) = isodeoxycholate + NAD(+). The catalysed reaction is 7alpha,12alpha-dihydroxy-3-oxo-5beta-cholan-24-oate + NADH + H(+) = isocholate + NAD(+). The enzyme catalyses 3-oxochenodeoxycholate + NADH + H(+) = isochenodeoxycholate + NAD(+). Functionally, involved in the modification of secondary bile acids into iso-bile acids (3beta-bile acids) via epimerization of the 3-OH group through a 3-oxo-intermediate. Catalyzes the reduction of 12-alpha-hydroxy-3-oxo-5-beta-cholan-24-oate (3-oxo-DCA) and 3-oxo-5-beta-cholan-24-oate (3-oxo-LCA) to yield isodeoxycholate (isoDCA) and isolithocholate (isoLCA), respectively. Is also able to catalyze the reduction of 3-dehydrocholate (3-oxo-CA or 7alpha,12alpha-dihydroxy-3-oxo-5beta-cholan-24-oate) and 7-alpha-hydroxy-3-oxo-5-beta-cholan-24-oate (3-oxo-CDCA), into isocholate (isoCA) and isochenodeoxycholate (isoCDCA), respectively. Prefers NADH to NADPH as cosubstrate. The conversion of the abundant bile acid deoxycholate (DCA) into isoDCA by the gut bacterium E.lenta favors the growth of the keystone commensal genus Bacteroides, since isoDCA is less cytotoxic than its parent compound, DCA; iso-bile acids have thus a potential role in modulating gut community composition. This Eggerthella lenta (strain ATCC 25559 / DSM 2243 / CCUG 17323 / JCM 9979 / KCTC 3265 / NCTC 11813 / VPI 0255 / 1899 B) (Eubacterium lentum) protein is 3beta-hydroxysteroid dehydrogenase 1.